Here is a 776-residue protein sequence, read N- to C-terminus: GATOR2 complex protein Wdr24 (776 aa).

WD repeat units follow at residues 63–103 (NLSY…RQKQ), 109–149 (EHER…SINT), 152–192 (CNSE…KCMV), 196–235 (AHYG…GLEH), 238–280 (HTIA…IPFA), and 284–326 (EHTN…ALKA). The segment at 466 to 490 (HRSSFSNQKNPMNSRRATQVASDWP) is disordered. Polar residues predominate over residues 469–490 (SFSNQKNPMNSRRATQVASDWP). Residues 703–726 (NCGECGRPMGGKVGWYCDKCKSMQ) form a C4-type zinc finger. The Zn(2+) site is built by Cys704, Cys707, Cys719, Cys722, Cys730, Cys733, Cys744, Cys747, His749, His752, His755, Cys766, Cys769, His771, and Cys773. The segment at 728–776 (AKCCVCGLIVRGVYAWCQGCSHGGHIEHLQKYFAKHSKCPKCGHLCAYS) adopts an RING-type; atypical zinc-finger fold.

This sequence belongs to the WD repeat WDR24 family. In terms of assembly, component of the GATOR complex consisting of mio, Nup44A/Seh1, Im11, Nplr3, Nplr2, Wdr24, Wdr59 and Sec13. Within the GATOR complex, probable component of the GATOR2 subcomplex which is likely composed of mio, Nup44A/Seh1, Wdr24, Wdr59 and Sec13. Interacts with Nup44A/Seh1. Interacts with mio. Interacts with Nplr3. The GATOR2 complex associates with unmet in the absence of S-adenosyl-L-methionine; the mio-Wdr24-Nup44A subcomplex is essential and sufficient for this interaction while Wdr59 and Sec13 are dispensable. This association acts as a nutrient sensor to inhibit mTORC1 signaling in the absence of methionine.

Its subcellular location is the lysosome. It localises to the cytoplasmic vesicle. It is found in the autophagosome. The catalysed reaction is S-ubiquitinyl-[E2 ubiquitin-conjugating enzyme]-L-cysteine + [acceptor protein]-L-lysine = [E2 ubiquitin-conjugating enzyme]-L-cysteine + N(6)-ubiquitinyl-[acceptor protein]-L-lysine.. Its pathway is protein modification; protein ubiquitination. An essential component of the GATOR subcomplex GATOR2 which functions as an activator of the amino acid-sensing branch of the mTORC1 signaling pathway. The two GATOR subcomplexes, GATOR1 and GATOR2, regulate the mTORC1 pathway in order to mediate metabolic homeostasis, female gametogenesis and the response to amino acid limitation and complete starvation. GATOR2 activates the mTORC1 signaling pathway through the inhibition of the GATOR1 subcomplex, controlling the switch to cell proliferation and growth under nutrient replete conditions and during female oocyte development. GATOR2 probably acts as an E3 ubiquitin-protein ligase toward GATOR1. In the presence of abundant amino acids, the GATOR2 complex mediates ubiquitination of components of the GATOR1 complex, leading to GATOR1 inactivation. This GATOR2 component is required for activating mTORC1 and promoting cell growth in both germline and somatic cells. In addition to its role in regulation of the mTORC1 complex, functions independently of mTORC1 to promote the acidification of lysosomes and facilitates autophagic flux. This is GATOR2 complex protein Wdr24 from Drosophila melanogaster (Fruit fly).